Here is a 223-residue protein sequence, read N- to C-terminus: Adenylate kinase (223 aa).

10-15 lines the ATP pocket; that stretch reads GAGKGT. Residues 30 to 59 form an NMP region; that stretch reads STGDILRQAVKEGTEVGKIAGELMKAGKLI. AMP is bound by residues T31, R36, 57 to 59, 85 to 88, and Q92; these read KLI and GFPR. An LID region spans residues 126–163; the sequence is GRYVCAQCGAGYHDEFKRPHKEGVCDICGSTEFKRRPD. Residue R127 coordinates ATP. Residues C130, C133, C150, and C153 each coordinate Zn(2+). Positions 160 and 172 each coordinate AMP. L200 contacts ATP.

This sequence belongs to the adenylate kinase family. In terms of assembly, monomer.

Its subcellular location is the cytoplasm. It catalyses the reaction AMP + ATP = 2 ADP. Its pathway is purine metabolism; AMP biosynthesis via salvage pathway; AMP from ADP: step 1/1. Its function is as follows. Catalyzes the reversible transfer of the terminal phosphate group between ATP and AMP. Plays an important role in cellular energy homeostasis and in adenine nucleotide metabolism. In Zymomonas mobilis subsp. mobilis (strain ATCC 31821 / ZM4 / CP4), this protein is Adenylate kinase.